The chain runs to 297 residues: N-acetylneuraminate lyase (297 aa).

Residues Ser-47 and Thr-48 each coordinate aceneuramate. The active-site Proton donor is the Tyr-137. The Schiff-base intermediate with substrate role is filled by Lys-165. Thr-167, Gly-189, Asp-191, Glu-192, and Ser-208 together coordinate aceneuramate.

The protein belongs to the DapA family. NanA subfamily. In terms of assembly, homotetramer.

It is found in the cytoplasm. The catalysed reaction is aceneuramate = aldehydo-N-acetyl-D-mannosamine + pyruvate. It functions in the pathway amino-sugar metabolism; N-acetylneuraminate degradation; D-fructose 6-phosphate from N-acetylneuraminate: step 1/5. Its function is as follows. Catalyzes the reversible aldol cleavage of N-acetylneuraminic acid (sialic acid; Neu5Ac) to form pyruvate and N-acetylmannosamine (ManNAc) via a Schiff base intermediate. This chain is N-acetylneuraminate lyase, found in Salmonella paratyphi A (strain AKU_12601).